A 204-amino-acid chain; its full sequence is bMERB domain-containing protein 1 (204 aa).

Residues 3-150 (LKQSLSTHLE…EQEEDKEMAD (148 aa)) enclose the bMERB domain. Residues 162–187 (VTKSPASSRAEKKAEPPPSKPTVAKT) are disordered.

This Homo sapiens (Human) protein is bMERB domain-containing protein 1.